Reading from the N-terminus, the 1061-residue chain is E3 ubiquitin-protein ligase Smurf1 (1061 aa).

The C2 domain occupies M1–L116. Disordered stretches follow at residues S143–R176 and H188–R496. Residues D167–Q200 enclose the WW 1 domain. Polar residues-rich tracts occupy residues S207–D225 and T233–A255. S262 is modified (phosphoserine). Over residues E264–N273 the composition is skewed to polar residues. Composition is skewed to low complexity over residues T274 to G300 and P311 to S322. The span at T348 to V359 shows a compositional bias: polar residues. The segment covering N360–Q378 has biased composition (low complexity). Positions P379–A392 are enriched in polar residues. The segment covering T393–S409 has biased composition (low complexity). Position 412 is a phosphothreonine (T412). Position 416 is a phosphoserine (S416). Over residues P417 to A439 the composition is skewed to polar residues. Residues R480–G494 show a composition bias toward gly residues. WW domains follow at residues L513 to I546 and G561 to L594. The tract at residues L513 to I602 is interaction with MAD. Composition is skewed to low complexity over residues P608–T617 and T624–P656. The tract at residues P608–P661 is disordered. The HECT domain occupies R723–E1061. C1029 serves as the catalytic Glycyl thioester intermediate.

Interacts with phosphorylated MAD.

The enzyme catalyses S-ubiquitinyl-[E2 ubiquitin-conjugating enzyme]-L-cysteine + [acceptor protein]-L-lysine = [E2 ubiquitin-conjugating enzyme]-L-cysteine + N(6)-ubiquitinyl-[acceptor protein]-L-lysine.. It functions in the pathway protein modification; protein ubiquitination. Its function is as follows. E3 ubiquitin-protein ligase which accepts ubiquitin from an E2 ubiquitin-conjugating enzyme in the form of a thioester and then directly transfers the ubiquitin to targeted substrates. Down-regulates Dpp signaling after gastrulation by promoting MAD ubiquitination and subsequent degradation. The sequence is that of E3 ubiquitin-protein ligase Smurf1 from Drosophila melanogaster (Fruit fly).